Reading from the N-terminus, the 662-residue chain is Serine/threonine kinase-like domain-containing protein STKLD1 (662 aa).

One can recognise a Protein kinase domain in the interval 1 to 202 (MLNPGALGVN…ILDMATCSFL (202 aa)). Residues 2–10 (LNPGALGVN) and K25 each bind ATP. A disordered region spans residues 639-662 (LQEDQLEPPAGQEAPLQGEPLFRP).

Belongs to the protein kinase superfamily. Ser/Thr protein kinase family. STKL subfamily.

This chain is Serine/threonine kinase-like domain-containing protein STKLD1 (Stkld1), found in Mus musculus (Mouse).